The chain runs to 330 residues: Protein qutG (330 aa).

Residues Glu78, Asp100, Leu102, Asp103, and Asp251 each coordinate Mg(2+). A substrate-binding site is contributed by Glu78. Substrate-binding positions include 102 to 105 and Asp251; that span reads LDGT.

Belongs to the inositol monophosphatase superfamily.

Its function is as follows. Not known. Probably involved in quinate metabolism. The protein is Protein qutG (qutG) of Emericella nidulans (strain FGSC A4 / ATCC 38163 / CBS 112.46 / NRRL 194 / M139) (Aspergillus nidulans).